The sequence spans 146 residues: Angiogenin (146 aa).

A signal peptide spans 1 to 24 (MVMGLGLFLLVFMLGLGLTPPTLA). Gln-25 is modified (pyrrolidone carboxylic acid). His-37 (proton acceptor) is an active-site residue. Position 45 (Arg-45) interacts with tRNA. 3 disulfides stabilise this stretch: Cys-50/Cys-105, Cys-63/Cys-116, and Cys-81/Cys-131. The Nucleolar localization signal signature appears at 55–59 (RRRGL). Cys-105 and Ile-127 together coordinate tRNA. The active-site Proton donor is His-138.

This sequence belongs to the pancreatic ribonuclease family. As to quaternary structure, homodimer. Interacts with RNH1; inhibiting ANG ribonuclease activity. Interacts with PCNA.

The protein localises to the secreted. The protein resides in the nucleus. It is found in the nucleolus. It localises to the cytoplasm. Its subcellular location is the stress granule. Has weak tRNA ribonuclease activity by itself due to partial autoinhibition by its C-terminus, which folds into a short alpha-helix that partially occludes the substrate-binding site. In absence of stress, the ribonuclease activity is inhibited by RNH1 in the cytoplasm. In response to stress, dissociates from RNH1 in the cytoplasm and associates with cytoplasmic ribosomes with vacant A-sites: ribosomes directly activate the tRNA ribonuclease activity of ANG by refolding the C-terminal alpha-helix. In response to stress, the angiogenic activity of ANG is inhibited by RNH1 in the nucleus. In terms of biological role, secreted ribonuclease that can either promote or restrict cell proliferation of target cells, depending on the context. Endocytosed in target cells via its receptor PLXNB2 and translocates to the cytoplasm or nucleus. Under stress conditions, localizes to the cytoplasm and promotes the assembly of stress granules (SGs): specifically cleaves a subset of tRNAs within anticodon loops to produce tRNA-derived stress-induced fragments (tiRNAs), resulting in translation repression and inhibition of cell proliferation. tiRNas also prevent formation of apoptosome, thereby promoting cell survival. Preferentially cleaves RNAs between a pyrimidine and an adenosine residue, suggesting that it cleaves the anticodon loop of tRNA(Ala) (32-UUAGCAU-38) after positions 33 and 36. Cleaves a subset of tRNAs, including tRNA(Ala), tRNA(Glu), tRNA(Gly), tRNA(Lys), tRNA(Val), tRNA(His), tRNA(Asp) and tRNA(Sec). Under growth conditions and in differentiated cells, translocates to the nucleus and stimulates ribosomal RNA (rRNA) transcription, including that containing the initiation site sequences of 45S rRNA, thereby promoting cell growth and proliferation. Angiogenin induces vascularization of normal and malignant tissues via its ability to promote rRNA transcription. Involved in hematopoietic stem and progenitor cell (HSPC) growth and survival by promoting rRNA transcription in growth conditions and inhibiting translation in response to stress, respectively. Mediates the crosstalk between myeloid and intestinal epithelial cells to protect the intestinal epithelial barrier integrity: secreted by myeloid cells and promotes intestinal epithelial cells proliferation and survival. Also mediates osteoclast-endothelial cell crosstalk in growing bone: produced by osteoclasts and protects the neighboring vascular cells against senescence by promoting rRNA transcription. This chain is Angiogenin (ANG), found in Rhinopithecus avunculus (Tonkin snub-nosed monkey).